Here is a 1394-residue protein sequence, read N- to C-terminus: DNA-directed RNA polymerase subunit beta' (1394 aa).

Zn(2+) contacts are provided by Cys-71, Cys-73, Cys-86, and Cys-89. Residues Asp-462, Asp-464, and Asp-466 each coordinate Mg(2+). Zn(2+) is bound by residues Cys-810, Cys-884, Cys-891, and Cys-894.

It belongs to the RNA polymerase beta' chain family. The RNAP catalytic core consists of 2 alpha, 1 beta, 1 beta' and 1 omega subunit. When a sigma factor is associated with the core the holoenzyme is formed, which can initiate transcription. It depends on Mg(2+) as a cofactor. The cofactor is Zn(2+).

The enzyme catalyses RNA(n) + a ribonucleoside 5'-triphosphate = RNA(n+1) + diphosphate. In terms of biological role, DNA-dependent RNA polymerase catalyzes the transcription of DNA into RNA using the four ribonucleoside triphosphates as substrates. This chain is DNA-directed RNA polymerase subunit beta', found in Caulobacter sp. (strain K31).